We begin with the raw amino-acid sequence, 342 residues long: Succinylglutamate desuccinylase (342 aa).

Positions 64, 67, and 159 each coordinate Zn(2+). Glu-222 is an active-site residue.

This sequence belongs to the AspA/AstE family. Succinylglutamate desuccinylase subfamily. Zn(2+) is required as a cofactor.

It carries out the reaction N-succinyl-L-glutamate + H2O = L-glutamate + succinate. It participates in amino-acid degradation; L-arginine degradation via AST pathway; L-glutamate and succinate from L-arginine: step 5/5. Functionally, transforms N(2)-succinylglutamate into succinate and glutamate. The protein is Succinylglutamate desuccinylase of Burkholderia orbicola (strain MC0-3).